A 254-amino-acid polypeptide reads, in one-letter code: Uridylate kinase (254 aa).

An ATP-binding site is contributed by 9–12 (KLSG). Gly51 lines the UMP pocket. Residues Gly52 and Arg56 each contribute to the ATP site. Residues Asp72 and 133-140 (SGNPFFTT) each bind UMP. Thr160, Tyr166, and Asp169 together coordinate ATP.

Belongs to the UMP kinase family. As to quaternary structure, homohexamer.

The protein resides in the cytoplasm. The catalysed reaction is UMP + ATP = UDP + ADP. It participates in pyrimidine metabolism; CTP biosynthesis via de novo pathway; UDP from UMP (UMPK route): step 1/1. Its activity is regulated as follows. Inhibited by UTP. In terms of biological role, catalyzes the reversible phosphorylation of UMP to UDP. This is Uridylate kinase from Synechococcus sp. (strain JA-3-3Ab) (Cyanobacteria bacterium Yellowstone A-Prime).